Consider the following 161-residue polypeptide: ATP synthase subunit b' (161 aa).

Residues 30 to 47 traverse the membrane as a helical segment; sequence VMAIQFLVLAALLNKLFY.

The protein belongs to the ATPase B chain family. As to quaternary structure, F-type ATPases have 2 components, F(1) - the catalytic core - and F(0) - the membrane proton channel. F(1) has five subunits: alpha(3), beta(3), gamma(1), delta(1), epsilon(1). F(0) has four main subunits: a(1), b(1), b'(1) and c(10-14). The alpha and beta chains form an alternating ring which encloses part of the gamma chain. F(1) is attached to F(0) by a central stalk formed by the gamma and epsilon chains, while a peripheral stalk is formed by the delta, b and b' chains.

The protein localises to the cellular thylakoid membrane. Its function is as follows. F(1)F(0) ATP synthase produces ATP from ADP in the presence of a proton or sodium gradient. F-type ATPases consist of two structural domains, F(1) containing the extramembraneous catalytic core and F(0) containing the membrane proton channel, linked together by a central stalk and a peripheral stalk. During catalysis, ATP synthesis in the catalytic domain of F(1) is coupled via a rotary mechanism of the central stalk subunits to proton translocation. Functionally, component of the F(0) channel, it forms part of the peripheral stalk, linking F(1) to F(0). The b'-subunit is a diverged and duplicated form of b found in plants and photosynthetic bacteria. The chain is ATP synthase subunit b' from Picosynechococcus sp. (strain ATCC 27264 / PCC 7002 / PR-6) (Agmenellum quadruplicatum).